The sequence spans 523 residues: Peptidyl-prolyl cis-trans isomerase 4 (523 aa).

The 74-residue stretch at 38-111 folds into the U-box domain; it reads KRLPINHCSL…GKFRCPVTFR (74 aa). Residues 278–433 form the PPIase cyclophilin-type domain; sequence KNAFVRLVTN…VSVVIMRAEV (156 aa).

The protein belongs to the cyclophilin-type PPIase family. PPIL2 subfamily. As to quaternary structure, interacts with mep-1. Exclusively in the larval body wall striated muscle cells.

Its subcellular location is the nucleus. The catalysed reaction is [protein]-peptidylproline (omega=180) = [protein]-peptidylproline (omega=0). It carries out the reaction S-ubiquitinyl-[E2 ubiquitin-conjugating enzyme]-L-cysteine + [acceptor protein]-L-lysine = [E2 ubiquitin-conjugating enzyme]-L-cysteine + N(6)-ubiquitinyl-[acceptor protein]-L-lysine.. It participates in protein modification; protein ubiquitination. Functionally, may catalyze the cis-trans isomerization of proline imidic peptide bonds in oligopeptides thereby assisting the folding of proteins. May also function as a chaperone, playing a role in intracellular transport of proteins. May also have a protein ubiquitin ligase activity acting as an E3 ubiquitin protein ligase or as a ubiquitin-ubiquitin ligase promoting elongation of ubiquitin chains on proteins. Influences the hermaphrodite switch from spermatogenesis to oogenesis. Required for body wall muscle cell development. The protein is Peptidyl-prolyl cis-trans isomerase 4 (cyn-4) of Caenorhabditis elegans.